Consider the following 229-residue polypeptide: 2-C-methyl-D-erythritol 4-phosphate cytidylyltransferase (229 aa).

The protein belongs to the IspD/TarI cytidylyltransferase family. IspD subfamily. As to quaternary structure, homodimer.

The enzyme catalyses 2-C-methyl-D-erythritol 4-phosphate + CTP + H(+) = 4-CDP-2-C-methyl-D-erythritol + diphosphate. Its pathway is isoprenoid biosynthesis; isopentenyl diphosphate biosynthesis via DXP pathway; isopentenyl diphosphate from 1-deoxy-D-xylulose 5-phosphate: step 2/6. Catalyzes the formation of 4-diphosphocytidyl-2-C-methyl-D-erythritol from CTP and 2-C-methyl-D-erythritol 4-phosphate (MEP). The protein is 2-C-methyl-D-erythritol 4-phosphate cytidylyltransferase of Wigglesworthia glossinidia brevipalpis.